The primary structure comprises 387 residues: 3-ketoacyl-CoA thiolase (387 aa).

The active-site Acyl-thioester intermediate is cysteine 91. Active-site proton acceptor residues include histidine 343 and cysteine 373.

This sequence belongs to the thiolase-like superfamily. Thiolase family. Heterotetramer of two alpha chains (FadB) and two beta chains (FadA).

The protein localises to the cytoplasm. It carries out the reaction an acyl-CoA + acetyl-CoA = a 3-oxoacyl-CoA + CoA. Its pathway is lipid metabolism; fatty acid beta-oxidation. Its function is as follows. Catalyzes the final step of fatty acid oxidation in which acetyl-CoA is released and the CoA ester of a fatty acid two carbons shorter is formed. The sequence is that of 3-ketoacyl-CoA thiolase from Vibrio cholerae serotype O1 (strain ATCC 39315 / El Tor Inaba N16961).